We begin with the raw amino-acid sequence, 350 residues long: Ion-translocating oxidoreductase complex subunit D (350 aa).

5 helical membrane-spanning segments follow: residues 19–39, 41–61, 67–87, 88–108, and 122–142; these read LMLLVILACLPGFLAQSWFFG, GTLIQILLALVTALGSEALVL, PVKPALLDGSAALTAVLIGLS, LPPLLPWWMLVLGTAFAIIIA, and PAMVAYVLLLVSFPVQMTSWL. Position 186 is an FMN phosphoryl threonine (threonine 186). Helical transmembrane passes span 213–233, 242–262, 264–284, and 299–316; these read WGGIGWSWVNLGYLLGGLFLL, IPGAILGSLLLAATLGYLMTP, ATATPMFHLFSGATMLGAFFI, and LVYGVLIGVLVYVIRRFG.

Belongs to the NqrB/RnfD family. As to quaternary structure, the complex is composed of six subunits: RnfA, RnfB, RnfC, RnfD, RnfE and RnfG. FMN is required as a cofactor.

It localises to the cell inner membrane. Part of a membrane-bound complex that couples electron transfer with translocation of ions across the membrane. This chain is Ion-translocating oxidoreductase complex subunit D, found in Aeromonas hydrophila subsp. hydrophila (strain ATCC 7966 / DSM 30187 / BCRC 13018 / CCUG 14551 / JCM 1027 / KCTC 2358 / NCIMB 9240 / NCTC 8049).